A 431-amino-acid polypeptide reads, in one-letter code: Cyclic 2,3-diphosphoglycerate synthetase (431 aa).

This sequence belongs to the cyclic 2,3-diphosphoglycerate synthetase family.

It is found in the cytoplasm. The enzyme catalyses (2R)-2,3-bisphosphoglycerate + ATP + H(+) = cyclic (2R)-2,3-bisphosphoglycerate + ADP + phosphate. Functionally, catalyzes the formation of cyclic 2,3-diphosphoglycerate (cDPG) by formation of an intramolecular phosphoanhydride bond at the expense of ATP. In Pyrococcus furiosus (strain ATCC 43587 / DSM 3638 / JCM 8422 / Vc1), this protein is Cyclic 2,3-diphosphoglycerate synthetase.